A 246-amino-acid chain; its full sequence is MKIYLKFKSYNKRICKLLQLFKLEHDQNCSMGLLINHNSLELYNRDNVNQKPIKVDFTSKKNHYRCHHFRRKNEVLYRVSGIKNSYFPTVLDATAGLGNDAFIFSFLGCKVIMIERHPIVAALLKDGLQRGYQDKKIGHWLQTRLHLIVNDSLKMLEIPILQPDVIYLDPMYPFYHKKSLPKKDMQFFRQLIGHNYDSKKLLEVSRKLAKNRIIVKRPYYAKPLSEDKVNHIVTTRNHRFDIYQPF.

S-adenosyl-L-methionine contacts are provided by residues 115–116 (ER) and Asp169.

This sequence belongs to the methyltransferase superfamily. RsmJ family.

The protein localises to the cytoplasm. It carries out the reaction guanosine(1516) in 16S rRNA + S-adenosyl-L-methionine = N(2)-methylguanosine(1516) in 16S rRNA + S-adenosyl-L-homocysteine + H(+). Functionally, specifically methylates the guanosine in position 1516 of 16S rRNA. The sequence is that of Ribosomal RNA small subunit methyltransferase J from Buchnera aphidicola subsp. Acyrthosiphon pisum (strain 5A).